The chain runs to 172 residues: Large ribosomal subunit protein uL10 (172 aa).

The protein belongs to the universal ribosomal protein uL10 family. Part of the ribosomal stalk of the 50S ribosomal subunit. The N-terminus interacts with L11 and the large rRNA to form the base of the stalk. The C-terminus forms an elongated spine to which L12 dimers bind in a sequential fashion forming a multimeric L10(L12)X complex.

Forms part of the ribosomal stalk, playing a central role in the interaction of the ribosome with GTP-bound translation factors. The sequence is that of Large ribosomal subunit protein uL10 from Nitrobacter hamburgensis (strain DSM 10229 / NCIMB 13809 / X14).